The primary structure comprises 603 residues: Penicillin-binding protein activator LpoA (603 aa).

An N-terminal signal peptide occupies residues 1–24 (MINHKRLSVPRILTPVALAITLAA). Residue Cys-25 is the site of N-palmitoyl cysteine attachment. Cys-25 carries S-diacylglycerol cysteine lipidation.

The protein belongs to the LpoA family. Interacts with PBP1a.

Its subcellular location is the cell outer membrane. Its function is as follows. Regulator of peptidoglycan synthesis that is essential for the function of penicillin-binding protein 1A (PBP1a). This is Penicillin-binding protein activator LpoA from Vibrio antiquarius (strain Ex25).